The primary structure comprises 131 residues: Transcription antitermination protein NusB (131 aa).

The protein belongs to the NusB family.

In terms of biological role, involved in transcription antitermination. Required for transcription of ribosomal RNA (rRNA) genes. Binds specifically to the boxA antiterminator sequence of the ribosomal RNA (rrn) operons. This Bacillus subtilis (strain 168) protein is Transcription antitermination protein NusB.